Reading from the N-terminus, the 2460-residue chain is Reducing polyketide synthase BOA6 (2460 aa).

A Ketosynthase family 3 (KS3) domain is found at 5 to 438 (NEPIAVIGTG…GTNAHAILES (434 aa)). Catalysis depends on for beta-ketoacyl synthase activity residues cysteine 178, histidine 317, and histidine 360. Residues 549–864 (VFTGQGAQWP…PYTGVLSRGD (316 aa)) are malonyl-CoA:ACP transacylase (MAT) domain. Residues 938–1073 (HELLGVRCAD…GRIKMTLGTP (136 aa)) are N-terminal hotdog fold. Positions 938 to 1244 (HELLGVRCAD…QMQSFTAARP (307 aa)) are dehydratase (DH) domain. Residues 938-1245 (HELLGVRCAD…MQSFTAARPS (308 aa)) form the PKS/mFAS DH domain. Histidine 970 serves as the catalytic Proton acceptor; for dehydratase activity. The interval 1088–1245 (LGPLNVDRFY…MQSFTAARPS (158 aa)) is C-terminal hotdog fold. Aspartate 1145 (proton donor; for dehydratase activity) is an active-site residue. The segment at 1399–1586 (NKFVTAAMKK…VNDFKDKSRY (188 aa)) is methyltransferase (MT) domain. A ketoreductase (KR) domain region spans residues 2098–2266 (SYLLAGLTGD…KRGGVASVIH (169 aa)). The Carrier domain occupies 2378-2456 (DEVLGVMQKC…DLCELACEEY (79 aa)). Residue serine 2416 is modified to O-(pantetheine 4'-phosphoryl)serine.

The protein operates within polyketide biosynthesis. Its function is as follows. Reducing polyketide synthase; part of the gene cluster A that mediates the biosynthesis of botcinic acid and its botcinin derivatives, acetate-derived polyketides that contribute to virulence when combined with the sesquiterpene botrydial. Botcinic acid and its derivatives have been shown to induce chlorosis and necrosis during host plant infection, but also have antifungal activities. Two polyketide synthases, BOA6 and BOA9, are involved in the biosynthesis of botcinins. BOA6 mediates the formation of the per-methylated tetraketide core by condensation of four units of malonyl-CoA with one unit of acetyl-CoA, which would be methylated in activated methylene groups to yield a bicyclic acid intermediate that could then either be converted to botrylactone derivatives or lose the starter acetate unit through a retro-Claisen type C-C bond cleavage to yield botcinin derivatives. The second polyketide synthase, BOA9, is probably required for the biosynthesis of the tetraketide side chain of botcinins. The methyltransferase (MT) domain within BOA6 is probably responsible for the incorporation of four methyl groups. The trans-enoyl reductase BOA5 might take over the enoyl reductase function of BOA6 that misses an ER domain. The monooxygenases BOA2, BOA3 and BOA4 might be involved in further hydroxylations at C4, C5 and C8, whereas BOA7, close to BOA9, could potentially be involved in the hydroxylation at C4 in the side chain of botcinins. The chain is Reducing polyketide synthase BOA6 from Botryotinia fuckeliana (strain B05.10) (Noble rot fungus).